Reading from the N-terminus, the 44-residue chain is Photosystem I reaction center subunit IX (44 aa).

A helical membrane pass occupies residues 7–27 (YLSVAPVVSTIWFGALAGLLI).

The protein belongs to the PsaJ family.

Its subcellular location is the plastid. The protein resides in the chloroplast thylakoid membrane. In terms of biological role, may help in the organization of the PsaE and PsaF subunits. The sequence is that of Photosystem I reaction center subunit IX from Cucumis sativus (Cucumber).